The primary structure comprises 199 residues: Fe/S biogenesis protein NfuA (199 aa).

[4Fe-4S] cluster contacts are provided by Cys-151 and Cys-154.

It belongs to the NfuA family. In terms of assembly, homodimer. Requires [4Fe-4S] cluster as cofactor.

Functionally, involved in iron-sulfur cluster biogenesis. Binds a 4Fe-4S cluster, can transfer this cluster to apoproteins, and thereby intervenes in the maturation of Fe/S proteins. Could also act as a scaffold/chaperone for damaged Fe/S proteins. This is Fe/S biogenesis protein NfuA from Xylella fastidiosa (strain M23).